A 692-amino-acid polypeptide reads, in one-letter code: MSYTPMSDLGQQGLFDITRTLLQQPDLASLCEALSQLVKRSALADNAAIVLWQAQTQRASYYASREKDTPIKYEDETVLAHGPVRSILSRPDTLHCSYEEFCETWPQLDAGGLYPKFGHYCLMPLAAEGHIFGGCEFIRYDDRPWSEKEFNRLQTFTQIVSVVTEQIQSRVVNNVDYELLCRERDNFRILVAITNAVLSRLDMDELVSEVAKEIHYYFDIDDISIVLRSHRKNKLNIYSTHYLDKQHPAHEQSEVDEAGTLTERVFKSKEMLLINLHERDDLAPYERMLFDTWGNQIQTLCLLPLMSGDTMLGVLKLAQCEEKVFTTTNLNLLRQIAERVAIAVDNALAYQEIHRLKERLVDENLALTEQLNNVDSEFGEIIGRSEAMYSVLKQVEMVAQSDSTVLILGETGTGKELIARAIHNLSGRNNRRMVKMNCAAMPAGLLESDLFGHERGAFTGASAQRIGRFELADKSSLFLDEVGDMPLELQPKLLRVLQEQEFERLGSNKIIQTDVRLIAATNRDLKKMVADREFRSDLYYRLNVFPIHLPPLRERPEDIPLLAKAFTFKIARRLGRNIDSIPAETLRTLSNMEWPGNVRELENVIERAVLLTRGNVLQLSLPDIVLPEPETPPAATVVALEGEDEYQLIVRVLKETNGVVAGPKGAAQRLGLKRTTLLSRMKRLGIDKSALI.

The GAF domain maps to 202 to 344 (DMDELVSEVA…QIAERVAIAV (143 aa)). Residues 381–610 (IIGRSEAMYS…LENVIERAVL (230 aa)) form the Sigma-54 factor interaction domain. ATP-binding positions include 409–416 (GETGTGKE) and 472–481 (ADKSSLFLDE). The segment at residues 663 to 682 (PKGAAQRLGLKRTTLLSRMK) is a DNA-binding region (H-T-H motif).

Required for induction of expression of the formate dehydrogenase H and hydrogenase-3 structural genes. Also activates expression of hyf operon (encodes the silent hydrogenase-4 gene cluster). This chain is Formate hydrogenlyase transcriptional activator FhlA (fhlA), found in Escherichia coli (strain K12).